We begin with the raw amino-acid sequence, 137 residues long: Ribosome-binding factor A (137 aa).

The protein belongs to the RbfA family. Monomer. Binds 30S ribosomal subunits, but not 50S ribosomal subunits or 70S ribosomes.

It is found in the cytoplasm. In terms of biological role, one of several proteins that assist in the late maturation steps of the functional core of the 30S ribosomal subunit. Associates with free 30S ribosomal subunits (but not with 30S subunits that are part of 70S ribosomes or polysomes). Required for efficient processing of 16S rRNA. May interact with the 5'-terminal helix region of 16S rRNA. This chain is Ribosome-binding factor A, found in Rhodopseudomonas palustris (strain BisB18).